A 185-amino-acid polypeptide reads, in one-letter code: Orotate phosphoribosyltransferase (185 aa).

5-phospho-alpha-D-ribose 1-diphosphate contacts are provided by residues R94, K95, K98, H100, and E120–S128. Orotate contacts are provided by T124 and R152.

It belongs to the purine/pyrimidine phosphoribosyltransferase family. PyrE subfamily. As to quaternary structure, homodimer. It depends on Mg(2+) as a cofactor.

It catalyses the reaction orotidine 5'-phosphate + diphosphate = orotate + 5-phospho-alpha-D-ribose 1-diphosphate. The protein operates within pyrimidine metabolism; UMP biosynthesis via de novo pathway; UMP from orotate: step 1/2. In terms of biological role, catalyzes the transfer of a ribosyl phosphate group from 5-phosphoribose 1-diphosphate to orotate, leading to the formation of orotidine monophosphate (OMP). The sequence is that of Orotate phosphoribosyltransferase from Thermococcus kodakarensis (strain ATCC BAA-918 / JCM 12380 / KOD1) (Pyrococcus kodakaraensis (strain KOD1)).